The chain runs to 112 residues: T cell receptor alpha variable 2 (112 aa).

The signal sequence occupies residues 1-25 (MALQSTLGAVWLGLLLNSLWKVAES). Positions 26 to 112 (KDQVFQPSTV…DAAVYYCAVE (87 aa)) constitute an Ig-like domain. C47 and C109 are joined by a disulfide. N48 and N84 each carry an N-linked (GlcNAc...) asparagine glycan.

In terms of assembly, alpha-beta TR is a heterodimer composed of an alpha and beta chain; disulfide-linked. The alpha-beta TR is associated with the transmembrane signaling CD3 coreceptor proteins to form the TR-CD3 (TcR or TCR). The assembly of alpha-beta TR heterodimers with CD3 occurs in the endoplasmic reticulum where a single alpha-beta TR heterodimer associates with one CD3D-CD3E heterodimer, one CD3G-CD3E heterodimer and one CD247 homodimer forming a stable octameric structure. CD3D-CD3E and CD3G-CD3E heterodimers preferentially associate with TR alpha and TR beta chains, respectively. The association of the CD247 homodimer is the last step of TcR assembly in the endoplasmic reticulum and is required for transport to the cell surface.

Its subcellular location is the cell membrane. V region of the variable domain of T cell receptor (TR) alpha chain that participates in the antigen recognition. Alpha-beta T cell receptors are antigen specific receptors which are essential to the immune response and are present on the cell surface of T lymphocytes. Recognize peptide-major histocompatibility (MH) (pMH) complexes that are displayed by antigen presenting cells (APC), a prerequisite for efficient T cell adaptive immunity against pathogens. Binding of alpha-beta TR to pMH complex initiates TR-CD3 clustering on the cell surface and intracellular activation of LCK that phosphorylates the ITAM motifs of CD3G, CD3D, CD3E and CD247 enabling the recruitment of ZAP70. In turn ZAP70 phosphorylates LAT, which recruits numerous signaling molecules to form the LAT signalosome. The LAT signalosome propagates signal branching to three major signaling pathways, the calcium, the mitogen-activated protein kinase (MAPK) kinase and the nuclear factor NF-kappa-B (NF-kB) pathways, leading to the mobilization of transcription factors that are critical for gene expression and essential for T cell growth and differentiation. The T cell repertoire is generated in the thymus, by V-(D)-J rearrangement. This repertoire is then shaped by intrathymic selection events to generate a peripheral T cell pool of self-MH restricted, non-autoaggressive T cells. Post-thymic interaction of alpha-beta TR with the pMH complexes shapes TR structural and functional avidity. The sequence is that of T cell receptor alpha variable 2 from Homo sapiens (Human).